We begin with the raw amino-acid sequence, 273 residues long: Glutamate transport system permease protein GluD (273 aa).

5 helical membrane passes run 26–46 (ILPGLWGTLKSAVFSVILALV), 64–84 (WFCAVIIETFRAIPVLILMIF), 100–120 (LAFAAVVFGLTMYNGSVIAEI), 150–170 (ILLPQAVAAMLPALISQMVIA), and 200–220 (LAALFVVALIMIVLNFSLTAL). An ABC transmembrane type-1 domain is found at 30–221 (LWGTLKSAVF…VLNFSLTALA (192 aa)). Residues 242 to 273 (PEQPDQGLETKDNVNVDWQDPDYKDLKTPGVQ) are disordered. The span at 262–273 (PDYKDLKTPGVQ) shows a compositional bias: basic and acidic residues.

Belongs to the binding-protein-dependent transport system permease family. HisMQ subfamily. The complex is composed of two ATP-binding proteins (GluA), two transmembrane proteins (GluC and GluD) and a solute-binding protein (GluB).

Its subcellular location is the cell membrane. Part of the ABC transporter complex GluABCD involved in glutamate uptake. Probably responsible for the translocation of the substrate across the membrane. The protein is Glutamate transport system permease protein GluD of Corynebacterium glutamicum (strain ATCC 13032 / DSM 20300 / JCM 1318 / BCRC 11384 / CCUG 27702 / LMG 3730 / NBRC 12168 / NCIMB 10025 / NRRL B-2784 / 534).